Consider the following 261-residue polypeptide: Ribosomal RNA large subunit methyltransferase E (261 aa).

The S-adenosyl-L-methionine site is built by Gly81, Trp83, Asp104, Asp120, and Asp144. Lys184 serves as the catalytic Proton acceptor. Positions 233–261 (GNALGHEVEDDGPMPHDPREDATADEDQD) are disordered. Positions 245-254 (PMPHDPREDA) are enriched in basic and acidic residues.

This sequence belongs to the class I-like SAM-binding methyltransferase superfamily. RNA methyltransferase RlmE family.

It localises to the cytoplasm. It catalyses the reaction uridine(2552) in 23S rRNA + S-adenosyl-L-methionine = 2'-O-methyluridine(2552) in 23S rRNA + S-adenosyl-L-homocysteine + H(+). In terms of biological role, specifically methylates the uridine in position 2552 of 23S rRNA at the 2'-O position of the ribose in the fully assembled 50S ribosomal subunit. The protein is Ribosomal RNA large subunit methyltransferase E of Allorhizobium ampelinum (strain ATCC BAA-846 / DSM 112012 / S4) (Agrobacterium vitis (strain S4)).